The primary structure comprises 286 residues: Pantothenate synthetase (286 aa).

30 to 37 (MGNLHAGH) lines the ATP pocket. The active-site Proton donor is the His-37. Gln-61 provides a ligand contact to (R)-pantoate. Residue Gln-61 coordinates beta-alanine. 149-152 (GEKD) contacts ATP. (R)-pantoate is bound at residue Gln-155. ATP-binding positions include Val-178 and 186 to 189 (MSSR).

This sequence belongs to the pantothenate synthetase family. As to quaternary structure, homodimer.

Its subcellular location is the cytoplasm. It catalyses the reaction (R)-pantoate + beta-alanine + ATP = (R)-pantothenate + AMP + diphosphate + H(+). It functions in the pathway cofactor biosynthesis; (R)-pantothenate biosynthesis; (R)-pantothenate from (R)-pantoate and beta-alanine: step 1/1. Functionally, catalyzes the condensation of pantoate with beta-alanine in an ATP-dependent reaction via a pantoyl-adenylate intermediate. This Methylococcus capsulatus (strain ATCC 33009 / NCIMB 11132 / Bath) protein is Pantothenate synthetase.